Reading from the N-terminus, the 601-residue chain is Putative ankyrin repeat protein R841 (601 aa).

ANK repeat units follow at residues 17 to 50 (NNIT…DVNA), 54 to 86 (HGKS…DVNH), 91 to 123 (QRSV…NINY), 165 to 197 (RENI…NIDH), 201 to 234 (YGQT…NINS), 238 to 269 (KGWS…EINS), 274 to 310 (NETM…SIDN), 314 to 349 (KGYT…NINS), 361 to 390 (VCCD…DVNS), 397 to 427 (TILM…NPNI), 432 to 463 (YHKF…DPNI), and 467 to 500 (IGNN…SYNC).

In Acanthamoeba polyphaga mimivirus (APMV), this protein is Putative ankyrin repeat protein R841.